The chain runs to 473 residues: Cannabinoid receptor 1 (473 aa).

At 1–118 the chain is on the extracellular side; the sequence is MKSILDGLAD…CFMILTASQQ (118 aa). Residues 2-23 are required for mitochondrial localization; sequence KSILDGLADTTFRTITTDLLYM. Asn-79 and Asn-85 each carry an N-linked (GlcNAc...) asparagine glycan. Residues 119–144 form a helical membrane-spanning segment; sequence LIIAVLSLTLGTFTVLENFLVLCVIL. Over 145-156 the chain is Cytoplasmic; it reads QSRTLRCRPSYH. Residues 157–177 traverse the membrane as a helical segment; sequence FIGSLAVADLLGSVIFVYSFL. Residues 178–189 lie on the Extracellular side of the membrane; the sequence is DFHVFHRKDSSN. Residues 190–214 form a helical membrane-spanning segment; that stretch reads VFLFKLGGVTASFTASVGSLFLTAI. Topologically, residues 215–234 are cytoplasmic; the sequence is DRYISIHRPLAYKRIVTRTK. The helical transmembrane segment at 235–257 threads the bilayer; the sequence is AVIAFCVMWTIAIIIAVLPLLGW. The Extracellular segment spans residues 258–275; the sequence is NCKKLKSVCSDIFPLIDE. Residues 276 to 301 traverse the membrane as a helical segment; that stretch reads NYLMFWIGVTSILLLFIVYAYVYILW. The Cytoplasmic portion of the chain corresponds to 302–346; sequence KAHSHAVRMLQRGTQKSIIIHTSEDGKVQITRPEQTRMDIRLAKT. The helical transmembrane segment at 347–367 threads the bilayer; that stretch reads LVLILVVLIICWGPLLAIMVY. At 368–379 the chain is on the extracellular side; sequence DVFGKMNNPIKT. The chain crosses the membrane as a helical span at residues 380 to 401; that stretch reads VFAFCSMLCLMDSTVNPIIYAL. Over 402–473 the chain is Cytoplasmic; it reads RSQDLRHAFL…VSTETSGEAV (72 aa). The S-palmitoyl cysteine moiety is linked to residue Cys-417.

It belongs to the G-protein coupled receptor 1 family. In terms of processing, palmitoylation at Cys-417 is important for recruitment at both plasma membrane and lipid rafts and association with G protein alpha subunits.

It is found in the cell membrane. It localises to the mitochondrion outer membrane. The protein localises to the cell projection. The protein resides in the axon. Its subcellular location is the presynapse. With respect to regulation, hemopressin, a peptide derived from hemoglobin subunit alpha (HBA1 and/or HBA2), acts as an antagonist peptide: hemopressin-binding efficiently blocks cannabinoid receptor CNR1 and subsequent signaling. G-protein coupled receptor for cannabinoids. Mediates many cannabinoid-induced effects in the central nervous system (CNS), as well as in peripheral tissues. Regulates cellular respiration and energy production in response to cannabinoids. Signaling typically involves reduction in cyclic AMP. The chain is Cannabinoid receptor 1 (CNR1) from Taricha granulosa (Roughskin newt).